The primary structure comprises 587 residues: Membrane protein insertase YidC (587 aa).

5 helical membrane-spanning segments follow: residues 5 to 25 (SVIGFSLIAVIMIVWLQFMKP), 365 to 385 (GLIIIIFAFLIKTVTWPLSLA), 430 to 450 (LGGCLPTVIQMPLLFAMFYVF), 480 to 500 (LPLYGDHIALMPILMAVTVFF), and 516 to 536 (IMIWMFPAMMLLFFNNMPSGL).

Belongs to the OXA1/ALB3/YidC family. Type 1 subfamily. As to quaternary structure, interacts with the Sec translocase complex via SecD. Specifically interacts with transmembrane segments of nascent integral membrane proteins during membrane integration.

It localises to the cell inner membrane. Required for the insertion and/or proper folding and/or complex formation of integral membrane proteins into the membrane. Involved in integration of membrane proteins that insert both dependently and independently of the Sec translocase complex, as well as at least some lipoproteins. Aids folding of multispanning membrane proteins. The chain is Membrane protein insertase YidC from Chlorobaculum parvum (strain DSM 263 / NCIMB 8327) (Chlorobium vibrioforme subsp. thiosulfatophilum).